We begin with the raw amino-acid sequence, 58 residues long: MLGWAITFFIIAIIAAVFGFGGIAGAATGIAQFLFFVFIALLVISLIANALRGRAPKA.

Transmembrane regions (helical) follow at residues 4-24 (WAIT…GGIA) and 27-47 (ATGI…ISLI).

It belongs to the UPF0391 family.

It localises to the cell membrane. This is UPF0391 membrane protein MADE_1011595 from Alteromonas mediterranea (strain DSM 17117 / CIP 110805 / LMG 28347 / Deep ecotype).